The sequence spans 184 residues: MGVIQTLDRLMTNPMPEGRVEDILRPEGENPLLEKGYVTTSVDALLNWARTGSMWPMTFGLACCAVEMMHAGAARLDLDRYGVVFRPSPRQSDVMIVAGTLVNKMAPALRKVYDQMPDPKWVISMGSCANGGGYYHYSYSVVRGCDRIVPVDIYVPGCPPTAEALVYGILQLQKKIWRTQTIAR.

[4Fe-4S] cluster-binding residues include C63, C64, C128, and C158.

This sequence belongs to the complex I 20 kDa subunit family. In terms of assembly, NDH-1 is composed of 14 different subunits. Subunits NuoB, C, D, E, F, and G constitute the peripheral sector of the complex. It depends on [4Fe-4S] cluster as a cofactor.

Its subcellular location is the cell inner membrane. The enzyme catalyses a quinone + NADH + 5 H(+)(in) = a quinol + NAD(+) + 4 H(+)(out). In terms of biological role, NDH-1 shuttles electrons from NADH, via FMN and iron-sulfur (Fe-S) centers, to quinones in the respiratory chain. Couples the redox reaction to proton translocation (for every two electrons transferred, four hydrogen ions are translocated across the cytoplasmic membrane), and thus conserves the redox energy in a proton gradient. This is NADH-quinone oxidoreductase subunit B from Xanthomonas campestris pv. campestris (strain 8004).